We begin with the raw amino-acid sequence, 143 residues long: Fluoride-specific ion channel FluC (143 aa).

The next 4 helical transmembrane spans lie at 3 to 23, 41 to 61, 76 to 96, and 103 to 123; these read AVVW…GSGL, WGTL…LIWL, IVGL…CLVF, and LMVG…VFLG. Residues Gly81 and Thr84 each contribute to the Na(+) site.

It belongs to the fluoride channel Fluc/FEX (TC 1.A.43) family.

It localises to the cell inner membrane. It catalyses the reaction fluoride(in) = fluoride(out). Its activity is regulated as follows. Na(+) is not transported, but it plays an essential structural role and its presence is essential for fluoride channel function. Its function is as follows. Fluoride-specific ion channel. Important for reducing fluoride concentration in the cell, thus reducing its toxicity. The sequence is that of Fluoride-specific ion channel FluC from Xylella fastidiosa (strain 9a5c).